Reading from the N-terminus, the 112-residue chain is MLNEQKCEACSIDAIALSKEEQQSLLLQLSDWQIIERDEIPQLEKVYKFKNFKQAWAFSNKIAELAEDEFHHPSILLEWGKVTITWWSHSIKGLHKNDFICASKCDALAIEE.

It belongs to the pterin-4-alpha-carbinolamine dehydratase family.

It catalyses the reaction (4aS,6R)-4a-hydroxy-L-erythro-5,6,7,8-tetrahydrobiopterin = (6R)-L-erythro-6,7-dihydrobiopterin + H2O. This Vibrio campbellii (strain ATCC BAA-1116) protein is Putative pterin-4-alpha-carbinolamine dehydratase.